The primary structure comprises 607 residues: Elongation factor 4 (607 aa).

One can recognise a tr-type G domain in the interval 11–193 (SKIRNFSIIA…QIVEKVPAPT (183 aa)). Residues 23 to 28 (DHGKST) and 140 to 143 (NKID) contribute to the GTP site.

It belongs to the TRAFAC class translation factor GTPase superfamily. Classic translation factor GTPase family. LepA subfamily.

The protein resides in the cell membrane. It carries out the reaction GTP + H2O = GDP + phosphate + H(+). Required for accurate and efficient protein synthesis under certain stress conditions. May act as a fidelity factor of the translation reaction, by catalyzing a one-codon backward translocation of tRNAs on improperly translocated ribosomes. Back-translocation proceeds from a post-translocation (POST) complex to a pre-translocation (PRE) complex, thus giving elongation factor G a second chance to translocate the tRNAs correctly. Binds to ribosomes in a GTP-dependent manner. The chain is Elongation factor 4 from Bacillus cereus (strain ZK / E33L).